Here is a 191-residue protein sequence, read N- to C-terminus: Peptidyl-tRNA hydrolase (191 aa).

Position 16 (Tyr16) interacts with tRNA. The active-site Proton acceptor is His21. Residues Phe66, Asn68, and Asn114 each coordinate tRNA.

This sequence belongs to the PTH family. As to quaternary structure, monomer.

It localises to the cytoplasm. It carries out the reaction an N-acyl-L-alpha-aminoacyl-tRNA + H2O = an N-acyl-L-amino acid + a tRNA + H(+). Functionally, hydrolyzes ribosome-free peptidyl-tRNAs (with 1 or more amino acids incorporated), which drop off the ribosome during protein synthesis, or as a result of ribosome stalling. Its function is as follows. Catalyzes the release of premature peptidyl moieties from peptidyl-tRNA molecules trapped in stalled 50S ribosomal subunits, and thus maintains levels of free tRNAs and 50S ribosomes. This Geotalea uraniireducens (strain Rf4) (Geobacter uraniireducens) protein is Peptidyl-tRNA hydrolase.